Here is a 170-residue protein sequence, read N- to C-terminus: MVDHARARKMADRIKEIVARKLDRGIKDPRLGFVTVTDVRVTGDLQHASIFYTVYGTDEERADTAAALKSATGMLRSEVGKNITARLTPSLEFILDGVPENAAAIDALLEEARRRDADVQAQAKAGVYAGDEDPYVKPRVIGEDEDDDDEEGDEDGDDVDRSAPGYEPAH.

The interval 123–170 (AKAGVYAGDEDPYVKPRVIGEDEDDDDEEGDEDGDDVDRSAPGYEPAH) is disordered. The span at 143-158 (EDEDDDDEEGDEDGDD) shows a compositional bias: acidic residues.

The protein belongs to the RbfA family. Monomer. Binds 30S ribosomal subunits, but not 50S ribosomal subunits or 70S ribosomes.

It localises to the cytoplasm. In terms of biological role, one of several proteins that assist in the late maturation steps of the functional core of the 30S ribosomal subunit. Associates with free 30S ribosomal subunits (but not with 30S subunits that are part of 70S ribosomes or polysomes). Required for efficient processing of 16S rRNA. May interact with the 5'-terminal helix region of 16S rRNA. This is Ribosome-binding factor A from Clavibacter sepedonicus (Clavibacter michiganensis subsp. sepedonicus).